A 363-amino-acid polypeptide reads, in one-letter code: Nucleoporin SEH1 (363 aa).

WD repeat units follow at residues 15-54 (AHRDLIHCVSFDPHGRRMATCASDMTMAIWDRKPDGNWRR), 60-101 (CHGG…SEKD), 108-149 (QWIR…RIYE), 158-206 (RWNL…VIYE), 223-264 (DLPC…SAIL), and 287-326 (GDHRKAWRLRYNLMGSVISSTSLDGTLRSWKSLFVNQWVK).

It belongs to the WD repeat SEC13 family. As to quaternary structure, component of the nuclear pore complex (NPC). Probably part of the GATOR complex.

The protein localises to the nucleus. The protein resides in the nuclear pore complex. It localises to the lysosome membrane. Its subcellular location is the nucleus envelope. In terms of biological role, probable component of the nuclear pore complex (NPC) which is involved in the trafficking of macromolecules between the cytoplasm and nucleus. As a component of the GATOR complex may function in the amino acid-sensing branch of the TORC1 signaling pathway. The sequence is that of Nucleoporin SEH1 from Caenorhabditis elegans.